The following is a 998-amino-acid chain: Mediator of RNA polymerase II transcription subunit 14 (998 aa).

It belongs to the Mediator complex subunit 14 family. As to quaternary structure, component of the Mediator complex.

The protein resides in the nucleus. Its function is as follows. Component of the Mediator complex, a coactivator involved in the regulated transcription of nearly all RNA polymerase II-dependent genes. Mediator functions as a bridge to convey information from gene-specific regulatory proteins to the basal RNA polymerase II transcription machinery. Mediator is recruited to promoters by direct interactions with regulatory proteins and serves as a scaffold for the assembly of a functional preinitiation complex with RNA polymerase II and the general transcription factors. The chain is Mediator of RNA polymerase II transcription subunit 14 (RGR1) from Kluyveromyces lactis (strain ATCC 8585 / CBS 2359 / DSM 70799 / NBRC 1267 / NRRL Y-1140 / WM37) (Yeast).